The chain runs to 601 residues: Elongation factor 4 (601 aa).

One can recognise a tr-type G domain in the interval 7–189 (KNIRNFSIVA…AIVTRLPPPM (183 aa)). GTP-binding positions include 19 to 24 (DHGKST) and 136 to 139 (NKVD).

Belongs to the TRAFAC class translation factor GTPase superfamily. Classic translation factor GTPase family. LepA subfamily.

It localises to the cell inner membrane. It catalyses the reaction GTP + H2O = GDP + phosphate + H(+). In terms of biological role, required for accurate and efficient protein synthesis under certain stress conditions. May act as a fidelity factor of the translation reaction, by catalyzing a one-codon backward translocation of tRNAs on improperly translocated ribosomes. Back-translocation proceeds from a post-translocation (POST) complex to a pre-translocation (PRE) complex, thus giving elongation factor G a second chance to translocate the tRNAs correctly. Binds to ribosomes in a GTP-dependent manner. This is Elongation factor 4 from Xanthobacter autotrophicus (strain ATCC BAA-1158 / Py2).